The primary structure comprises 141 residues: Hemoglobin subunit beta-C (141 aa).

Positions 1–141 (PNKALITGFW…VASALAHRYH (141 aa)) constitute a Globin domain. 2 residues coordinate heme b: H58 and H87.

It belongs to the globin family. Heterotetramer of two alpha chains and two beta chains. As to expression, red blood cells.

In terms of biological role, involved in oxygen transport from the lung to the various peripheral tissues. The polypeptide is Hemoglobin subunit beta-C (Ammotragus lervia (Barbary sheep)).